A 295-amino-acid polypeptide reads, in one-letter code: Glycine--tRNA ligase alpha subunit (295 aa).

Belongs to the class-II aminoacyl-tRNA synthetase family. As to quaternary structure, tetramer of two alpha and two beta subunits.

The protein localises to the cytoplasm. The catalysed reaction is tRNA(Gly) + glycine + ATP = glycyl-tRNA(Gly) + AMP + diphosphate. The chain is Glycine--tRNA ligase alpha subunit from Rhodospirillum rubrum (strain ATCC 11170 / ATH 1.1.1 / DSM 467 / LMG 4362 / NCIMB 8255 / S1).